The chain runs to 503 residues: TGF-beta receptor type-1 (503 aa).

Positions 1–29 are cleaved as a signal peptide; it reads MEVAAGAPRSRLLLFVLAATATLAPEATA. Over 30–126 the chain is Extracellular; it reads FQCFCHLCTK…PPSGLGPVEL (97 aa). 5 disulfides stabilise this stretch: cysteine 32–cysteine 50, cysteine 34–cysteine 37, cysteine 44–cysteine 67, cysteine 82–cysteine 96, and cysteine 97–cysteine 102. Asparagine 41 carries an N-linked (GlcNAc...) asparagine glycan. Residues 127–147 traverse the membrane as a helical segment; that stretch reads AAVIAGPVCFVCISLMLMVYI. The Cytoplasmic portion of the chain corresponds to 148–503; that stretch reads CHNRTVIHHR…QLSQQEGIKM (356 aa). Serine 165 is modified (phosphoserine). The GS domain maps to 175–204; sequence TTLKDLIYDMTTSGSGSGLPLLVQRTIART. Residues threonine 185 and threonine 186 each carry the phosphothreonine; by TGFBR2 modification. Phosphoserine; by TGFBR2 occurs at positions 187, 189, and 191. Positions 193–194 match the FKBP1A-binding motif; the sequence is LP. Residues 205–495 enclose the Protein kinase domain; the sequence is IVLQESIGKG…LRIKKTLSQL (291 aa). ATP-binding positions include 211 to 219 and lysine 232; that span reads IGKGRFGEV. Aspartate 333 functions as the Proton acceptor in the catalytic mechanism. Lysine 391 is covalently cross-linked (Glycyl lysine isopeptide (Lys-Gly) (interchain with G-Cter in SUMO)).

It belongs to the protein kinase superfamily. TKL Ser/Thr protein kinase family. TGFB receptor subfamily. In terms of assembly, homodimer; in the endoplasmic reticulum but also at the cell membrane. Heterohexamer; TGFB1, TGFB2 and TGFB3 homodimeric ligands assemble a functional receptor composed of two TGFBR1 and TGFBR2 heterodimers to form a ligand-receptor heterohexamer. The respective affinity of TGBRB1 and TGFBR2 for the ligands may modulate the kinetics of assembly of the receptor and may explain the different biological activities of TGFB1, TGFB2 and TGFB3. Component of a complex composed of TSC22D1 (via N-terminus), TGFBR1 and TGFBR2; the interaction between TSC22D1 and TGFBR1 is inhibited by SMAD7 and promoted by TGFB1. Interacts with CD109; inhibits TGF-beta receptor activation in keratinocytes. Interacts with RBPMS. Interacts (unphosphorylated) with FKBP1A; prevents TGFBR1 phosphorylation by TGFBR2 and stabilizes it in the inactive conformation. Interacts with SMAD2, SMAD3 and ZFYVE9; ZFYVE9 recruits SMAD2 and SMAD3 to the TGF-beta receptor. Interacts with TRAF6 and MAP3K7; induces MAP3K7 activation by TRAF6. Interacts with PARD6A; involved in TGF-beta induced epithelial to mesenchymal transition. Interacts with NEDD4L. Interacts with SMAD7, SMURF1 and SMURF2; SMAD7 recruits NEDD4L, SMURF1 and SMURF2 to the TGF-beta receptor. Interacts with USP15 and VPS39. Interacts with SDCBP (via C-terminus). Interacts with CAV1 and this interaction is impaired in the presence of SDCBP. Interacts with APPL1; interaction is TGF beta dependent; mediates trafficking of the TGFBR1 from the endosomes to the nucleus via microtubules in a TRAF6-dependent manner. Interacts with GPR50; this interaction promotes the constitutive activation of SMAD signaling pathway. It depends on Mg(2+) as a cofactor. Mn(2+) is required as a cofactor. Phosphorylated at basal levels in the absence of ligand. Activated upon phosphorylation by TGFBR2, mainly in the GS domain. Phosphorylation in the GS domain abrogates FKBP1A-binding. In terms of processing, N-Glycosylated. Post-translationally, ubiquitinated; undergoes ubiquitination catalyzed by several E3 ubiquitin ligases including SMURF1, SMURF2 and NEDD4L2. Results in the proteasomal and/or lysosomal degradation of the receptor thereby negatively regulating its activity. Deubiquitinated by USP15, leading to stabilization of the protein and enhanced TGF-beta signal. Its ubiquitination and proteasome-mediated degradation is negatively regulated by SDCBP.

The protein resides in the cell membrane. It localises to the cell junction. It is found in the tight junction. The protein localises to the membrane raft. Its subcellular location is the cell surface. The enzyme catalyses L-threonyl-[receptor-protein] + ATP = O-phospho-L-threonyl-[receptor-protein] + ADP + H(+). The catalysed reaction is L-seryl-[receptor-protein] + ATP = O-phospho-L-seryl-[receptor-protein] + ADP + H(+). Its activity is regulated as follows. Kept in an inactive conformation by FKBP1A preventing receptor activation in absence of ligand. CD109 is another inhibitor of the receptor. Its function is as follows. Transmembrane serine/threonine kinase forming with the TGF-beta type II serine/threonine kinase receptor, TGFBR2, the non-promiscuous receptor for the TGF-beta cytokines TGFB1, TGFB2 and TGFB3. Transduces the TGFB1, TGFB2 and TGFB3 signal from the cell surface to the cytoplasm and is thus regulating a plethora of physiological and pathological processes including cell cycle arrest in epithelial and hematopoietic cells, control of mesenchymal cell proliferation and differentiation, wound healing, extracellular matrix production, immunosuppression and carcinogenesis. The formation of the receptor complex composed of 2 TGFBR1 and 2 TGFBR2 molecules symmetrically bound to the cytokine dimer results in the phosphorylation and the activation of TGFBR1 by the constitutively active TGFBR2. Activated TGFBR1 phosphorylates SMAD2 which dissociates from the receptor and interacts with SMAD4. The SMAD2-SMAD4 complex is subsequently translocated to the nucleus where it modulates the transcription of the TGF-beta-regulated genes. This constitutes the canonical SMAD-dependent TGF-beta signaling cascade. Also involved in non-canonical, SMAD-independent TGF-beta signaling pathways. For instance, TGFBR1 induces TRAF6 autoubiquitination which in turn results in MAP3K7 ubiquitination and activation to trigger apoptosis. Also regulates epithelial to mesenchymal transition through a SMAD-independent signaling pathway through PARD6A phosphorylation and activation. The chain is TGF-beta receptor type-1 (TGFBR1) from Sus scrofa (Pig).